Consider the following 439-residue polypeptide: ATP-dependent protease ATPase subunit HslU (439 aa).

Residues Ile-17, 59 to 64 (GVGKTE), Asp-251, Glu-317, and Arg-389 contribute to the ATP site.

The protein belongs to the ClpX chaperone family. HslU subfamily. In terms of assembly, a double ring-shaped homohexamer of HslV is capped on each side by a ring-shaped HslU homohexamer. The assembly of the HslU/HslV complex is dependent on binding of ATP.

It is found in the cytoplasm. Its function is as follows. ATPase subunit of a proteasome-like degradation complex; this subunit has chaperone activity. The binding of ATP and its subsequent hydrolysis by HslU are essential for unfolding of protein substrates subsequently hydrolyzed by HslV. HslU recognizes the N-terminal part of its protein substrates and unfolds these before they are guided to HslV for hydrolysis. This is ATP-dependent protease ATPase subunit HslU from Campylobacter jejuni subsp. jejuni serotype O:23/36 (strain 81-176).